Consider the following 75-residue polypeptide: Scuwaprin-a (75 aa).

Residues 1–24 (MSSGGLLLLLGLLTLWAELTPVSG) form the signal peptide. In terms of domain architecture, WAP spans 27 to 72 (RPKKPGLCPPRPQKPPCVKECKNDWSCPGQQKCCSYGCIDECRDPI). Cystine bridges form between Cys-34–Cys-60, Cys-43–Cys-64, Cys-47–Cys-59, and Cys-53–Cys-68.

It belongs to the venom waprin family. In terms of tissue distribution, expressed by the venom gland.

The protein localises to the secreted. Damages membranes of susceptible bacteria. Has no hemolytic activity. Not toxic to mice. Does not inhibit the proteinases elastase and cathepsin G. The sequence is that of Scuwaprin-a from Oxyuranus scutellatus scutellatus (Australian taipan).